Consider the following 242-residue polypeptide: 1-(5-phosphoribosyl)-5-[(5-phosphoribosylamino)methylideneamino] imidazole-4-carboxamide isomerase (242 aa).

The active-site Proton acceptor is the Asp-8. Residue Asp-129 is the Proton donor of the active site.

This sequence belongs to the HisA/HisF family.

Its subcellular location is the cytoplasm. The catalysed reaction is 1-(5-phospho-beta-D-ribosyl)-5-[(5-phospho-beta-D-ribosylamino)methylideneamino]imidazole-4-carboxamide = 5-[(5-phospho-1-deoxy-D-ribulos-1-ylimino)methylamino]-1-(5-phospho-beta-D-ribosyl)imidazole-4-carboxamide. It participates in amino-acid biosynthesis; L-histidine biosynthesis; L-histidine from 5-phospho-alpha-D-ribose 1-diphosphate: step 4/9. The polypeptide is 1-(5-phosphoribosyl)-5-[(5-phosphoribosylamino)methylideneamino] imidazole-4-carboxamide isomerase (Clostridium botulinum (strain Kyoto / Type A2)).